The sequence spans 404 residues: D-galactonate dehydratase family member PC1_0802 (404 aa).

2 residues coordinate substrate: Asn-37 and His-122. The active-site Proton donor/acceptor is the Tyr-159. Residue Asp-212 coordinates Mg(2+). His-214 (proton donor/acceptor) is an active-site residue. Mg(2+) contacts are provided by Glu-238 and Glu-264. Substrate contacts are provided by Glu-264, Arg-285, His-314, Asp-318, and Glu-341.

This sequence belongs to the mandelate racemase/muconate lactonizing enzyme family. GalD subfamily. It depends on Mg(2+) as a cofactor.

The catalysed reaction is D-mannonate = 2-dehydro-3-deoxy-D-gluconate + H2O. Functionally, has low D-mannonate dehydratase activity (in vitro), suggesting that this is not a physiological substrate and that it has no significant role in D-mannonate degradation in vivo. Has no detectable activity with a panel of 70 other acid sugars (in vitro). This is D-galactonate dehydratase family member PC1_0802 from Pectobacterium carotovorum subsp. carotovorum (strain PC1).